The chain runs to 185 residues: TATA-box-binding protein 3 (185 aa).

2 consecutive repeat copies span residues 7–84 (IENV…ANKL) and 100–178 (VQNI…RKEF).

It belongs to the TBP family.

In terms of biological role, general factor that plays a role in the activation of archaeal genes transcribed by RNA polymerase. Binds specifically to the TATA box promoter element which lies close to the position of transcription initiation. The sequence is that of TATA-box-binding protein 3 from Methanosarcina acetivorans (strain ATCC 35395 / DSM 2834 / JCM 12185 / C2A).